A 255-amino-acid chain; its full sequence is Probable membrane transporter protein HI_0198 (255 aa).

8 helical membrane-spanning segments follow: residues 7–27 (LLAI…IAGG), 28–48 (GGLI…MALG), 76–96 (IWFI…LIQS), 99–119 (VAIF…YFLF), 132–152 (LSYL…DGFF), 153–173 (GPGT…FNLP), 191–211 (FALF…MMAG), and 235–255 (VVIM…WFHF).

It belongs to the 4-toluene sulfonate uptake permease (TSUP) (TC 2.A.102) family.

It localises to the cell membrane. This chain is Probable membrane transporter protein HI_0198, found in Haemophilus influenzae (strain ATCC 51907 / DSM 11121 / KW20 / Rd).